The primary structure comprises 145 residues: Angiogenin (145 aa).

The N-terminal stretch at 1-24 (MAISPGPLFLIFVLGLVVIPPTLA) is a signal peptide. At glutamine 25 the chain carries Pyrrolidone carboxylic acid. Residue histidine 37 is the Proton acceptor of the active site. Arginine 45 and aspartate 46 together coordinate tRNA. 3 disulfide bridges follow: cysteine 50/cysteine 104, cysteine 63/cysteine 115, and cysteine 81/cysteine 130. The Nucleolar localization signal motif lies at 55–59 (KRRSL). Residues cysteine 104 and valine 126 each contribute to the tRNA site. Histidine 137 acts as the Proton donor in catalysis.

The protein belongs to the pancreatic ribonuclease family. As to quaternary structure, homodimer. Interacts with RNH1; inhibiting ANG ribonuclease activity. Interacts with PCNA.

It is found in the secreted. The protein resides in the nucleus. The protein localises to the nucleolus. Its subcellular location is the cytoplasm. It localises to the stress granule. Has weak tRNA ribonuclease activity by itself due to partial autoinhibition by its C-terminus (residues 139-145), which folds into a short alpha-helix that partially occludes the substrate-binding site. In absence of stress, the ribonuclease activity is inhibited by RNH1 in the cytoplasm. In response to stress, dissociates from RNH1 in the cytoplasm and associates with cytoplasmic ribosomes with vacant A-sites: ribosomes directly activate the tRNA ribonuclease activity of ANG by refolding the C-terminal alpha-helix. In response to stress, the angiogenic activity of ANG is inhibited by RNH1 in the nucleus. In terms of biological role, secreted ribonuclease that can either promote or restrict cell proliferation of target cells, depending on the context. Endocytosed in target cells via its receptor PLXNB2 and translocates to the cytoplasm or nucleus. Under stress conditions, localizes to the cytoplasm and promotes the assembly of stress granules (SGs): specifically cleaves a subset of tRNAs within anticodon loops to produce tRNA-derived stress-induced fragments (tiRNAs), resulting in translation repression and inhibition of cell proliferation. tiRNas also prevent formation of apoptosome, thereby promoting cell survival. Preferentially cleaves RNAs between a pyrimidine and an adenosine residue, suggesting that it cleaves the anticodon loop of tRNA(Ala) (32-UUAGCAU-38) after positions 33 and 36. Cleaves a subset of tRNAs, including tRNA(Ala), tRNA(Glu), tRNA(Gly), tRNA(Lys), tRNA(Val), tRNA(His), tRNA(Asp) and tRNA(Sec). Under growth conditions and in differentiated cells, translocates to the nucleus and stimulates ribosomal RNA (rRNA) transcription, including that containing the initiation site sequences of 45S rRNA, thereby promoting cell growth and proliferation. Angiogenin induces vascularization of normal and malignant tissues via its ability to promote rRNA transcription. Involved in hematopoietic stem and progenitor cell (HSPC) growth and survival by promoting rRNA transcription in growth conditions and inhibiting translation in response to stress, respectively. Mediates the crosstalk between myeloid and intestinal epithelial cells to protect the intestinal epithelial barrier integrity: secreted by myeloid cells and promotes intestinal epithelial cells proliferation and survival. Also mediates osteoclast-endothelial cell crosstalk in growing bone: produced by osteoclasts and protects the neighboring vascular cells against senescence by promoting rRNA transcription. In Mus musculus (Mouse), this protein is Angiogenin.